The primary structure comprises 550 residues: Arginine--tRNA ligase (550 aa).

A 'HIGH' region motif is present at residues Ala-130–Gly-140.

Belongs to the class-I aminoacyl-tRNA synthetase family. In terms of assembly, monomer.

It localises to the cytoplasm. It carries out the reaction tRNA(Arg) + L-arginine + ATP = L-arginyl-tRNA(Arg) + AMP + diphosphate. The protein is Arginine--tRNA ligase of Mycolicibacterium gilvum (strain PYR-GCK) (Mycobacterium gilvum (strain PYR-GCK)).